Reading from the N-terminus, the 366-residue chain is Putative F-box protein At3g13624 (366 aa).

Positions 1-51 (MTTISDLPEDVVEEILPRVPLTSLSAVRSICKTWNTLSKNRVLCKAAVKKQ) constitute an F-box domain.

The protein is Putative F-box protein At3g13624 of Arabidopsis thaliana (Mouse-ear cress).